A 137-amino-acid chain; its full sequence is Protein MGF 110-7L (137 aa).

An N-terminal signal peptide occupies residues 1 to 20; it reads MLVIILGIIGLLASSNLVSS. 3 N-linked (GlcNAc...) asparagine; by host glycosylation sites follow: Asn69, Asn70, and Asn105.

It belongs to the asfivirus MGF 110 family.

Plays a role in virus cell tropism, and may be required for efficient virus replication in macrophages. This is Protein MGF 110-7L from African swine fever virus (isolate Tick/South Africa/Pretoriuskop Pr4/1996) (ASFV).